We begin with the raw amino-acid sequence, 555 residues long: Putative ankyrin repeat protein L283 (555 aa).

ANK repeat units lie at residues 364 to 389 (TKVNNIHQFIQKDEFKSAQKLLEDDI), 390 to 420 (VFKKVVDTAIKSNNQKTIKYLIDQQQFDINE), 422 to 447 (IKLALEENKLDIFNMLRLFNFDKVRC), and 455 to 488 (GYLEIVDKMMENDFEKINGDLVNIVLRNAAEGGK).

This Acanthamoeba polyphaga mimivirus (APMV) protein is Putative ankyrin repeat protein L283.